The sequence spans 838 residues: MGEISPRGGDFDIDYILENASSLEKISLLAGHDFWHTAPLPRFNVPSVRVSDGPNGVRGTKFFDGVRAACLPCGTGLAATWDQSLLFDAGVLIGQECLAKGAHCWLGPTVCIQRSPLGGRGFESFAEDPYATGKLAAAYIRGAQSTGVISTIKHFAANDQEHERISVNAVMSERALREVHLLPFQIAIADAAPGAVMTCYNKINGQHVSESKEMLDGLLRKEWGWKGLIMSDWFGTYSTAEALNAGLDLEMPGPTRLRGPLLELAISSRKVSRSTLDERARTVLEFVKRANKAEVSTVESTRDFPEDRRLNRKLAADSIVLLKNESGLLPLNLKALKSAALIGPNMKTAAFCGGGSASLQPYYSISPYQGIMNQLPPGVEIIYETGASSYVFIPELEASEVRTPEGQPGLRMRFYREPPSVKERRVVEETILQESSWQLMGFSNPQLDRLFYADIEAELIAPATGPFEFGLAVYGSGSLFIDDQLIIDNTTVQRGGNFFFGKGTREEKATVDLVKGQLYKIRVEFASGPSSKLMKPGVVNFGGGAGRLGMVQAIDPELAIARAVEAAKRADVTILGVGLTRDHESEGFDRSHMDLPPAVASLVTAVLDVAPDAILMTQSGTPFNMLPWADNVKTHLHAWFGGNELGNGIADVLFGVVNPSGKLPLSFPRRIEDTPTYLNFGSERGQVTYGEGIYVGYRYYEKVLRDVLYPFGHGLSYTSFAYSDFAVDTASATLNVRNSGDVAGAEVVQLYIAADATTSSIARPVKELKGFAKVTLQPGETCSVSIPFDRFTTAFWDQEAHVWTCEKGQYRVMVGSSSQNILLEGVLEIKETTTWSGL.

N-linked (GlcNAc...) asparagine glycosylation occurs at Asn19. Asp232 is a catalytic residue. N-linked (GlcNAc...) asparagine glycosylation is found at Asn324 and Asn489. The PA14 domain occupies 405 to 564; it reads EGQPGLRMRF…DPELAIARAV (160 aa).

The protein belongs to the glycosyl hydrolase 3 family.

The protein localises to the secreted. The enzyme catalyses Hydrolysis of terminal, non-reducing beta-D-glucosyl residues with release of beta-D-glucose.. Its pathway is glycan metabolism; cellulose degradation. Its function is as follows. Beta-glucosidases are one of a number of cellulolytic enzymes involved in the degradation of cellulosic biomass. Catalyzes the last step releasing glucose from the inhibitory cellobiose. The protein is Probable beta-glucosidase K (bglK) of Emericella nidulans (strain FGSC A4 / ATCC 38163 / CBS 112.46 / NRRL 194 / M139) (Aspergillus nidulans).